The following is a 183-amino-acid chain: Oligoribonuclease (183 aa).

One can recognise an Exonuclease domain in the interval 8-171 (LIWLDLEMTG…QDIRDSIEEL (164 aa)). Residue tyrosine 129 is part of the active site.

This sequence belongs to the oligoribonuclease family.

The protein resides in the cytoplasm. Functionally, 3'-to-5' exoribonuclease specific for small oligoribonucleotides. The protein is Oligoribonuclease of Coxiella burnetii (strain RSA 493 / Nine Mile phase I).